We begin with the raw amino-acid sequence, 462 residues long: WD repeat-containing protein WRAP73 (462 aa).

4 WD repeats span residues 46 to 86 (TCLD…WHCK), 89 to 129 (EGSA…VSYI), 176 to 210 (TDTQDLTGIEWAPNGCVLAAWDTCLEYKVLLYSLD), and 221 to 260 (EWSLGIKSVAWSPSSQFLAIGSYDGKVRLLNHVTWKMITE). Position 281 is a phosphoserine (serine 281). 2 WD repeats span residues 328–369 (NPRM…LFVV) and 371–410 (EHMSPVRSFQWDPQQPRLAICTGGSKVYLWSPAGCVSVQV).

As to quaternary structure, interacts with SSX2IP. In terms of tissue distribution, ubiquitous.

It is found in the cytoplasm. The protein resides in the cytoskeleton. It localises to the microtubule organizing center. Its subcellular location is the centrosome. The SSX2IP:WRAP73 complex is proposed to act as regulator of spindle anchoring at the mitotic centrosome. Required for the centrosomal localization of SSX2IP and normal mitotic bipolar spindle morphology. Required for the targeting of centriole satellite proteins to centrosomes such as of PCM1, SSX2IP, CEP290 and PIBF1/CEP90. Required for ciliogenesis and involved in the removal of the CEP97:CCP110 complex from the mother centriole. Involved in ciliary vesicle formation at the mother centriole and required for the docking of vesicles to the basal body during ciliogenesis; may promote docking of RAB8A- and ARL13B-containing vesicles. The chain is WD repeat-containing protein WRAP73 (Wrap73) from Mus musculus (Mouse).